The following is a 122-amino-acid chain: Large ribosomal subunit protein uL14 (122 aa).

It belongs to the universal ribosomal protein uL14 family. In terms of assembly, part of the 50S ribosomal subunit. Forms a cluster with proteins L3 and L19. In the 70S ribosome, L14 and L19 interact and together make contacts with the 16S rRNA in bridges B5 and B8.

In terms of biological role, binds to 23S rRNA. Forms part of two intersubunit bridges in the 70S ribosome. This chain is Large ribosomal subunit protein uL14, found in Clavibacter michiganensis subsp. michiganensis (strain NCPPB 382).